The following is a 669-amino-acid chain: p135Gag-Myb-Ets-transforming protein (669 aa).

The segment covering 1 to 10 (NSTMRRKVEQ) has biased composition (basic and acidic residues). Disordered stretches follow at residues 1-27 (NSTM…SATT) and 132-153 (TQNH…NTMT). The transcriptional activation domain stretch occupies residues 90–142 (PAAAAIQRHYNDEDPEKEKRIKELELLLMSTENELKGQQALPTQNHTANYPGW). The PNT domain maps to 276–361 (ATFSGFAKEQ…EHLEILQKEE (86 aa)). A DNA-binding region (ETS) is located at residues 556–640 (GSGPIQLWQF…AGKRYVYRFV (85 aa)).

The protein resides in the host nucleus. In terms of biological role, DNA-binding protein that specifically recognizes the sequence 5'-YAAC[GT]G-3'. The Myb-Ets protein induces predominantly erythroblastosis in chicken and transforms avian erythroblasts and immature myelomonocytic cells in culture. It appears that the Ets domain is responsible for the effects on erythroid cells and that the Myb domain encodes the myeloid-transforming capacity. In Avian leukemia virus E26, this protein is p135Gag-Myb-Ets-transforming protein (GAG).